Here is a 156-residue protein sequence, read N- to C-terminus: Small ribosomal subunit protein uS7 (156 aa).

Belongs to the universal ribosomal protein uS7 family. Part of the 30S ribosomal subunit. Contacts proteins S9 and S11.

In terms of biological role, one of the primary rRNA binding proteins, it binds directly to 16S rRNA where it nucleates assembly of the head domain of the 30S subunit. Is located at the subunit interface close to the decoding center, probably blocks exit of the E-site tRNA. This is Small ribosomal subunit protein uS7 from Parvibaculum lavamentivorans (strain DS-1 / DSM 13023 / NCIMB 13966).